Reading from the N-terminus, the 111-residue chain is UPF0339 protein ACIAD0721 (111 aa).

A run of 2 repeats spans residues A10–R58 and A61–L109. The interval S89 to G111 is disordered.

It belongs to the UPF0339 family. Duplicated subfamily.

This is UPF0339 protein ACIAD0721 from Acinetobacter baylyi (strain ATCC 33305 / BD413 / ADP1).